The following is a 798-amino-acid chain: Cadherin-20 (798 aa).

Positions 1 to 35 (MWTSGRMSNAKNLFGLGVSLYFWGLMDLTTTVLSG) are cleaved as a signal peptide. A propeptide spanning residues 36-58 (SARPLTEGPEDNLSDKLHQRMKR) is cleaved from the precursor. Asn47 carries N-linked (GlcNAc...) asparagine glycosylation. The Extracellular portion of the chain corresponds to 59–618 (SWVWNQFFVL…AYVLPVSLSR (560 aa)). 5 Cadherin domains span residues 60–164 (WVWN…EPKF), 165–273 (LDGP…PPRF), 274–392 (PQKH…EPSF), 389–493 (EPSF…APEF), and 493–615 (FARF…LPVS). The short motif at 88–90 (RGD) is the Cell attachment site element. An N-linked (GlcNAc...) asparagine glycan is attached at Asn260. Residues Asn419, Asn460, and Asn541 are each glycosylated (N-linked (GlcNAc...) asparagine). Residues 619 to 639 (GALIAILACIFVLLVLVLLIL) traverse the membrane as a helical segment. Over 640–798 (SMRRQRKQPY…GATDSSGALW (159 aa)) the chain is Cytoplasmic.

Detected in embryonic spinal cord, in the brachial and lumbar section of motor neurons (at protein level). Detected in ventro-lateral portion of embryonic spinal cord, in the brachial and lumbar section of embryonic motor neurons. Detected in embryonic adductor motor neurons and embryonic dorsal root ganglion. Detected in the caudal half of newly generated somites and in presomitic mesoderm.

It localises to the cell membrane. Cadherins are calcium-dependent cell adhesion proteins. They preferentially interact with themselves in a homophilic manner in connecting cells; cadherins may thus contribute to the sorting of heterogeneous cell types. This is Cadherin-20 (CDH20) from Gallus gallus (Chicken).